We begin with the raw amino-acid sequence, 776 residues long: General transcription and DNA repair factor IIH helicase subunit XPD (776 aa).

A Helicase ATP-binding domain is found at D7–D277. Residue M42 to T49 participates in ATP binding. 4 residues coordinate [4Fe-4S] cluster: C115, C133, C150, and C184. The DEAH box signature appears at D228–H231. The disordered stretch occupies residues H736–T776. A compositionally biased stretch (polar residues) spans T742 to N754. A compositionally biased stretch (low complexity) spans S755 to T776.

The protein belongs to the helicase family. RAD3/XPD subfamily. As to quaternary structure, component of the 7-subunit TFIIH core complex composed of XPB/repB, XPD/repD, gtf2h1, gtf2h2, gtf2h3, gtf2h4 and gtf2h5, which is active in NER. The core complex associates with the 3-subunit CDK-activating kinase (CAK) module composed of cycH/cyclin H, cdk7 and mnat1 to form the 10-subunit holoenzyme (holo-TFIIH) active in transcription. Mg(2+) is required as a cofactor. Requires [4Fe-4S] cluster as cofactor.

It is found in the nucleus. The catalysed reaction is Couples ATP hydrolysis with the unwinding of duplex DNA at the replication fork by translocating in the 5'-3' direction. This creates two antiparallel DNA single strands (ssDNA). The leading ssDNA polymer is the template for DNA polymerase III holoenzyme which synthesizes a continuous strand.. It carries out the reaction ATP + H2O = ADP + phosphate + H(+). Functionally, ATP-dependent 5'-3' DNA helicase, component of the general transcription and DNA repair factor IIH (TFIIH) core complex, which is involved in general and transcription-coupled nucleotide excision repair (NER) of damaged DNA and, when complexed to CDK-activating kinase (CAK), in transcription by RNA polymerase II. In NER, TFIIH acts by opening DNA around the lesion to allow the excision of the damaged oligonucleotide and its replacement by a new DNA fragment. The ATP-dependent helicase activity of XPD/repD is required for DNA opening. In transcription, TFIIH has an essential role in transcription initiation. When the pre-initiation complex (PIC) has been established, TFIIH is required for promoter opening and promoter escape. Phosphorylation of the C-terminal tail (CTD) of the largest subunit of RNA polymerase II by the kinase module CAK controls the initiation of transcription. XPD/repD acts by forming a bridge between CAK and the core-TFIIH complex. This chain is General transcription and DNA repair factor IIH helicase subunit XPD, found in Dictyostelium discoideum (Social amoeba).